Reading from the N-terminus, the 129-residue chain is Putative transmembrane protein 10 (129 aa).

Transmembrane regions (helical) follow at residues 3–23 (NFSYFSTIFSIALMSSNAFAG), 27–47 (LLVGFCPCIEINTLTLFLSSL), and 85–105 (SSVLSCFTSCFVIYFYPFFVF).

Its subcellular location is the host membrane. The chain is Putative transmembrane protein 10 (SIFV0010) from Sulfolobus islandicus filamentous virus (isolate Iceland/Hveragerdi) (SIFV).